Here is a 513-residue protein sequence, read N- to C-terminus: ATP synthase subunit alpha (513 aa).

169–176 (GDRQTGKT) lines the ATP pocket.

Belongs to the ATPase alpha/beta chains family. As to quaternary structure, F-type ATPases have 2 components, CF(1) - the catalytic core - and CF(0) - the membrane proton channel. CF(1) has five subunits: alpha(3), beta(3), gamma(1), delta(1), epsilon(1). CF(0) has three main subunits: a(1), b(2) and c(9-12). The alpha and beta chains form an alternating ring which encloses part of the gamma chain. CF(1) is attached to CF(0) by a central stalk formed by the gamma and epsilon chains, while a peripheral stalk is formed by the delta and b chains.

Its subcellular location is the cell inner membrane. It catalyses the reaction ATP + H2O + 4 H(+)(in) = ADP + phosphate + 5 H(+)(out). In terms of biological role, produces ATP from ADP in the presence of a proton gradient across the membrane. The alpha chain is a regulatory subunit. The protein is ATP synthase subunit alpha of Polynucleobacter necessarius subsp. necessarius (strain STIR1).